We begin with the raw amino-acid sequence, 259 residues long: 5'-nucleotidase SurE (259 aa).

Positions 8, 9, 39, and 93 each coordinate a divalent metal cation.

The protein belongs to the SurE nucleotidase family. It depends on a divalent metal cation as a cofactor.

The protein localises to the cytoplasm. It carries out the reaction a ribonucleoside 5'-phosphate + H2O = a ribonucleoside + phosphate. Nucleotidase that shows phosphatase activity on nucleoside 5'-monophosphates. The chain is 5'-nucleotidase SurE from Thermococcus kodakarensis (strain ATCC BAA-918 / JCM 12380 / KOD1) (Pyrococcus kodakaraensis (strain KOD1)).